The primary structure comprises 345 residues: Nicotinate-nucleotide--dimethylbenzimidazole phosphoribosyltransferase (345 aa).

Glu312 (proton acceptor) is an active-site residue.

This sequence belongs to the CobT family.

The enzyme catalyses 5,6-dimethylbenzimidazole + nicotinate beta-D-ribonucleotide = alpha-ribazole 5'-phosphate + nicotinate + H(+). It participates in nucleoside biosynthesis; alpha-ribazole biosynthesis; alpha-ribazole from 5,6-dimethylbenzimidazole: step 1/2. In terms of biological role, catalyzes the synthesis of alpha-ribazole-5'-phosphate from nicotinate mononucleotide (NAMN) and 5,6-dimethylbenzimidazole (DMB). The protein is Nicotinate-nucleotide--dimethylbenzimidazole phosphoribosyltransferase of Phocaeicola vulgatus (strain ATCC 8482 / DSM 1447 / JCM 5826 / CCUG 4940 / NBRC 14291 / NCTC 11154) (Bacteroides vulgatus).